Here is a 56-residue protein sequence, read N- to C-terminus: Alpha-conotoxin Pn1.2 (56 aa).

Positions 1–16 (MFTVFLLVVLATTVVS) are cleaved as a signal peptide. A propeptide spanning residues 17–39 (FTSDRASDGGNAAMSDLIALTIK) is cleaved from the precursor. Cystine bridges form between cysteine 41–cysteine 47 and cysteine 42–cysteine 55. The interval 43-45 (SHP) is ser-Xaa-Pro motif, crucial for potent interaction with nAChR. Position 55 is a cysteine amide (cysteine 55).

This sequence belongs to the conotoxin A superfamily. Post-translationally, non-native isomers 'ribbon' (with disulfide connectivity C1-C4; C2-C3) and 'beads' (with disulfide connectivity C1-C2; C3-C4) also inhibit high voltage-activated (HVA) calcium channel currents in rat DRG neurons (20-30% inhibition at 1 uM toxin). In terms of tissue distribution, expressed by the venom duct.

Its subcellular location is the secreted. Functionally, alpha-conotoxins act on postsynaptic membranes, they bind to the nicotinic acetylcholine receptors (nAChR) and thus inhibit them. This toxin inhibits human alpha-7/CHRNA7 and alpha-9-alpha-10/CHRNA9/CHRNA10 AChR (complete inhibition at 3 uM of toxin). In addition, this toxin inhibits high voltage-activated (HVA) calcium channel currents in rat DRG neurons (22% inhibition at 1 uM toxin) probably by activating GABA(B) receptors (GABBR1 and/or GABBR2). The sequence is that of Alpha-conotoxin Pn1.2 from Conus pennaceus (Feathered cone).